A 156-amino-acid chain; its full sequence is Small ribosomal subunit protein uS7 (156 aa).

Belongs to the universal ribosomal protein uS7 family. Part of the 30S ribosomal subunit. Contacts proteins S9 and S11.

In terms of biological role, one of the primary rRNA binding proteins, it binds directly to 16S rRNA where it nucleates assembly of the head domain of the 30S subunit. Is located at the subunit interface close to the decoding center, probably blocks exit of the E-site tRNA. This chain is Small ribosomal subunit protein uS7, found in Anaeromyxobacter dehalogenans (strain 2CP-1 / ATCC BAA-258).